A 193-amino-acid polypeptide reads, in one-letter code: MTDYLLLFVGTVLVNNFVLVKFLGLCPFMGVSKKLETAMGMGLATTFVMTLASICAWLIDTWILIPLNLIYLRTLAFILVIAVVVQFTEMVVRKTSPVLYRLLGIFLPLITTNCAVLGVALLNINLGHNFLQSALYGFSAAVGFSLVMVLFAAIRERLAVADVPAPFRGNAIALITAGLMSLAFMGFSGLVKL.

6 helical membrane passes run 5–25 (LLLF…FLGL), 39–59 (MGMG…AWLI), 63–83 (ILIP…VIAV), 102–122 (LLGI…VALL), 134–154 (ALYG…FAAI), and 171–191 (AIAL…SGLV).

The protein belongs to the NqrDE/RnfAE family. As to quaternary structure, the complex is composed of six subunits: RsxA, RsxB, RsxC, RsxD, RsxE and RsxG.

The protein localises to the cell inner membrane. Functionally, part of a membrane-bound complex that couples electron transfer with translocation of ions across the membrane. Required to maintain the reduced state of SoxR. This chain is Ion-translocating oxidoreductase complex subunit A, found in Shigella boydii serotype 18 (strain CDC 3083-94 / BS512).